The following is a 180-amino-acid chain: MKQLLDFLPLVVFFVFYKMYDIFVASGALIVATLLALAFTWFKYRKVEKMTLVTAIMVLVFGTLTLAFHSDLFIKWKVTVLYVLFAVALLVSQWFMKKPLIQRMLGKELTLPDTVWSTLNMSWAVFFLVCGLLNIYVAFWLPQDIWVNFKVFGLTALTLVFTLISGVYIYRHMPEEQKKS.

5 helical membrane passes run 22 to 42, 50 to 70, 72 to 92, 121 to 141, and 149 to 169; these read IFVASGALIVATLLALAFTWF, MTLVTAIMVLVFGTLTLAFHS, LFIKWKVTVLYVLFAVALLVS, MSWAVFFLVCGLLNIYVAFWL, and FKVFGLTALTLVFTLISGVYI.

Belongs to the YciB family.

Its subcellular location is the cell inner membrane. Functionally, plays a role in cell envelope biogenesis, maintenance of cell envelope integrity and membrane homeostasis. In Yersinia enterocolitica serotype O:8 / biotype 1B (strain NCTC 13174 / 8081), this protein is Inner membrane-spanning protein YciB.